A 200-amino-acid chain; its full sequence is MSSLEINNSCFSLETKLPSSHQSVEDSASEPSGYEAKDPPQDTLKDVDDVLEKPKDIIQFTAKKLSVGEVSQLVVSPLCGAVSLFVGTTRNNFEGKKVISLEYEAYLPMAENEIRKICNDIRQKWPVRHIAVFHRLGLVPVSEASTVIAVSSAHRAASLEAVSYAIDSLKAKVPIWKKEIYEESTSSWKRNKECFWAADD.

Over residues 16–30 (KLPSSHQSVEDSASE) the composition is skewed to polar residues. Positions 16–43 (KLPSSHQSVEDSASEPSGYEAKDPPQDT) are disordered. S20 carries the post-translational modification Phosphoserine. Residues 154–155 (HR), K170, and 177–179 (KKE) contribute to the substrate site.

This sequence belongs to the MoaE family. MOCS2B subfamily. In terms of assembly, heterotetramer; composed of 2 small (MOCS2A) and 2 large (MOCS2B) subunits.

The protein resides in the cytoplasm. Its subcellular location is the cytosol. The enzyme catalyses 2 [molybdopterin-synthase sulfur-carrier protein]-C-terminal-Gly-aminoethanethioate + cyclic pyranopterin phosphate + H2O = molybdopterin + 2 [molybdopterin-synthase sulfur-carrier protein]-C-terminal Gly-Gly + 2 H(+). Its pathway is cofactor biosynthesis; molybdopterin biosynthesis. In terms of biological role, catalytic subunit of the molybdopterin synthase complex, a complex that catalyzes the conversion of precursor Z into molybdopterin. Acts by mediating the incorporation of 2 sulfur atoms from thiocarboxylated MOCS2A into precursor Z to generate a dithiolene group. The sequence is that of Molybdopterin synthase catalytic subunit from Rattus norvegicus (Rat).